The chain runs to 1070 residues: DNA-directed RNA polymerase subunit beta (1070 aa).

This sequence belongs to the RNA polymerase beta chain family. In plastids the minimal PEP RNA polymerase catalytic core is composed of four subunits: alpha, beta, beta', and beta''. When a (nuclear-encoded) sigma factor is associated with the core the holoenzyme is formed, which can initiate transcription.

The protein localises to the plastid. Its subcellular location is the chloroplast. It catalyses the reaction RNA(n) + a ribonucleoside 5'-triphosphate = RNA(n+1) + diphosphate. DNA-dependent RNA polymerase catalyzes the transcription of DNA into RNA using the four ribonucleoside triphosphates as substrates. The protein is DNA-directed RNA polymerase subunit beta of Gossypium barbadense (Sea Island cotton).